The sequence spans 20 residues: Methyl-coenzyme M reductase subunit gamma (20 aa).

The segment at 1-20 (AYERQFYPGATSVAENNIGH) is disordered.

This sequence belongs to the methyl-coenzyme M reductase gamma subunit family. In terms of assembly, MCR from M.thermophila is a heterotrimer composed of an alpha, a beta, and a gamma subunit. It depends on coenzyme F430 as a cofactor.

It is found in the cytoplasm. It carries out the reaction coenzyme B + methyl-coenzyme M = methane + coenzyme M-coenzyme B heterodisulfide. It functions in the pathway one-carbon metabolism; methyl-coenzyme M reduction; methane from methyl-coenzyme M: step 1/1. Its function is as follows. Component of the methyl-coenzyme M reductase (MCR) I that catalyzes the reductive cleavage of methyl-coenzyme M (CoM-S-CH3 or 2-(methylthio)ethanesulfonate) using coenzyme B (CoB or 7-mercaptoheptanoylthreonine phosphate) as reductant which results in the production of methane and the mixed heterodisulfide of CoB and CoM (CoM-S-S-CoB). This is the final step in methanogenesis. This Methanosarcina thermophila protein is Methyl-coenzyme M reductase subunit gamma.